The following is a 274-amino-acid chain: 2,3,4,5-tetrahydropyridine-2,6-dicarboxylate N-succinyltransferase (274 aa).

Substrate contacts are provided by Arg104 and Asp141.

Belongs to the transferase hexapeptide repeat family. In terms of assembly, homotrimer.

Its subcellular location is the cytoplasm. The catalysed reaction is (S)-2,3,4,5-tetrahydrodipicolinate + succinyl-CoA + H2O = (S)-2-succinylamino-6-oxoheptanedioate + CoA. It participates in amino-acid biosynthesis; L-lysine biosynthesis via DAP pathway; LL-2,6-diaminopimelate from (S)-tetrahydrodipicolinate (succinylase route): step 1/3. The chain is 2,3,4,5-tetrahydropyridine-2,6-dicarboxylate N-succinyltransferase from Shewanella halifaxensis (strain HAW-EB4).